A 240-amino-acid polypeptide reads, in one-letter code: ATP-dependent dethiobiotin synthetase BioD (240 aa).

13-18 provides a ligand contact to ATP; it reads EVGKTV. T17 serves as a coordination point for Mg(2+). Residue K38 is part of the active site. S42 serves as a coordination point for substrate. Residues D55, 116 to 119, 176 to 177, and 205 to 207 contribute to the ATP site; these read EGAG, ND, and PWL. Mg(2+) contacts are provided by D55 and E116.

Belongs to the dethiobiotin synthetase family. Homodimer. Mg(2+) is required as a cofactor.

Its subcellular location is the cytoplasm. The enzyme catalyses (7R,8S)-7,8-diammoniononanoate + CO2 + ATP = (4R,5S)-dethiobiotin + ADP + phosphate + 3 H(+). The protein operates within cofactor biosynthesis; biotin biosynthesis; biotin from 7,8-diaminononanoate: step 1/2. In terms of biological role, catalyzes a mechanistically unusual reaction, the ATP-dependent insertion of CO2 between the N7 and N8 nitrogen atoms of 7,8-diaminopelargonic acid (DAPA, also called 7,8-diammoniononanoate) to form a ureido ring. The sequence is that of ATP-dependent dethiobiotin synthetase BioD from Pseudescherichia vulneris (Escherichia vulneris).